The sequence spans 336 residues: Glycerol-3-phosphate dehydrogenase [NAD(P)+] (336 aa).

The NADPH site is built by Ser-11, Trp-12, Arg-32, and Lys-106. Sn-glycerol 3-phosphate contacts are provided by Lys-106 and Gly-136. Ala-140 contributes to the NADPH binding site. Sn-glycerol 3-phosphate is bound by residues Lys-191, Asp-244, Ser-254, Arg-255, and Asn-256. Catalysis depends on Lys-191, which acts as the Proton acceptor. Arg-255 contributes to the NADPH binding site. Residues Val-279 and Glu-281 each contribute to the NADPH site.

Belongs to the NAD-dependent glycerol-3-phosphate dehydrogenase family.

The protein localises to the cytoplasm. The enzyme catalyses sn-glycerol 3-phosphate + NAD(+) = dihydroxyacetone phosphate + NADH + H(+). It catalyses the reaction sn-glycerol 3-phosphate + NADP(+) = dihydroxyacetone phosphate + NADPH + H(+). Its pathway is membrane lipid metabolism; glycerophospholipid metabolism. In terms of biological role, catalyzes the reduction of the glycolytic intermediate dihydroxyacetone phosphate (DHAP) to sn-glycerol 3-phosphate (G3P), the key precursor for phospholipid synthesis. This is Glycerol-3-phosphate dehydrogenase [NAD(P)+] from Frankia casuarinae (strain DSM 45818 / CECT 9043 / HFP020203 / CcI3).